A 651-amino-acid chain; its full sequence is Nucleolin (651 aa).

The span at 1-11 (MVKLAKGAKTQ) shows a compositional bias: low complexity. Positions 1–230 (MVKLAKGAKT…AKKTKTDTAS (230 aa)) are disordered. Acidic residues predominate over residues 26 to 45 (EDSEEEEDMEEDDSSDEEVE). A compositionally biased stretch (low complexity) spans 54–79 (KKTATPAKATPGKAATPGKKGATPAK). A compositionally biased stretch (acidic residues) spans 89-101 (SEEEEDDSDEEAE). Over residues 106–116 (IKNKPVAKKAV) the composition is skewed to basic residues. 3 stretches are compositionally biased toward acidic residues: residues 122–134 (SEED…ESEE), 155–168 (SEEE…DEPM), and 183–204 (AEED…EEEQ). Residue S155 is modified to Phosphoserine. The span at 219 to 228 (PEAKKTKTDT) shows a compositional bias: basic and acidic residues. RRM domains lie at 233–309 (LSIF…KAMA), 325–399 (RTLF…FTGE), 415–488 (KVLV…FSQG), and 503–578 (KTLF…FAKP). Residues 574-651 (DFAKPKGDSQ…GQGKKMRFDD (78 aa)) form a disordered region. The segment covering 585 to 644 (GGRGGFGRGGGFRGGRGGRGGGGGRGFGGRGGGRGRGGFGGRGGGGFRGGQGGGFRGGQG) has biased composition (gly residues).

It is found in the nucleus. It localises to the nucleolus. Functionally, nucleolin is the major nucleolar protein of growing eukaryotic cells. It is found associated with intranucleolar chromatin and pre-ribosomal particles. It induces chromatin decondensation by binding to histone H1. It is thought to play a role in pre-rRNA transcription and ribosome assembly. The protein is Nucleolin (ncl) of Xenopus laevis (African clawed frog).